Reading from the N-terminus, the 220-residue chain is Adenylate kinase (220 aa).

Position 13–18 (13–18 (GAGKGT)) interacts with ATP. The tract at residues 33–62 (ATGDMLRSQVARQTELGKEAKKIMDQGGLV) is NMP. AMP-binding positions include Thr34, Arg39, 60–62 (GLV), 89–92 (GFPR), and Gln96. The segment at 130–167 (GRLVHPGSGRSYHLEFNPPKVPMKDDVTGEPLIQRSDD) is LID. Residues Arg131 and 140–141 (SY) each bind ATP. AMP is bound by residues Arg164 and Arg175. ATP is bound at residue Gln203.

Belongs to the adenylate kinase family. AK2 subfamily. Monomer.

The protein localises to the cytoplasm. The protein resides in the cytosol. It is found in the mitochondrion intermembrane space. Its subcellular location is the nucleus. It carries out the reaction AMP + ATP = 2 ADP. Its function is as follows. Catalyzes the reversible transfer of the terminal phosphate group between ATP and AMP. Plays an important role in cellular energy homeostasis and in adenine nucleotide metabolism. Adenylate kinase activity is critical for regulation of the phosphate utilization and the AMP de novo biosynthesis pathways. This is Adenylate kinase (adk1) from Schizosaccharomyces pombe (strain 972 / ATCC 24843) (Fission yeast).